A 1248-amino-acid chain; its full sequence is MEFIPTQTFYNRRYQPRPWTPRPTIQVIRPRPRPQRKAGQLAQLISAVNKLTMRAVPQQKPRKNRKNKKQKQKQQAPRNNMNQKKQPPKKKPAQKKKKPGRRERMCMKIENDCIFEVKHEGKVTGYACLVGDKVMKPAHVKGTIDNADLAKLAFKRSSKYDLECAQIPVHMKSDASKFTHEKPEGYYNWHHGAVQYSGGRFTIPTGAGKPGDSGRPIFDNKGRVVAIVLGGANEGARTALSVVTWNKDIVTKITPEGAEEWSLAIPVMCLLANTTFPCSQPPCAPCCYEKEPEKTLRMLEDNVMSPGYYQLLQASLTCSPRRQRRSIKDNFNVYKATRPYLAHCPDCGEGHSCHSPVALERIRNEATDGTLKIQVSLQIGIKTDDSHDWTKLRYMDNHMPADAERAGLLVRTSAPCTITGTMGHFILARCPKGETLTVGFTDGRKISHSCTHPFHHDPPVIGREKFHSRPQHGKELPCSTYVQSNAATAEEVEVHMPPDTPDRTLMSQQSGNVKITVNSQTVRYKCNCGDSNEGLTTTDKVINNCKVDQCHAAVTNHKKWQYNSPLVPRNVELGDRKGKIHIPFPLANVTCRGPKARNPTVTYGKNQVIMLLYPDHPTLLSYRNMGEEPNYQEEWVTHKKEVRLTVPTEGLEVTWGNNEPYKYWPQLSTNGTAHGHPHEIILYYYELYPTMTVVVVSVASFVLLSMVGVAVGMCMCARRRCITPYELTPGATVPFLLSLICCIRTAKAATYQEAAVYLWNEQQPLFWLQAIIPLAALIVLCNCLRLLPCCCKTLTFLAVMSVGAHTVSAYEHVTVIPNTVGVPYKTLVNRPGYSPMVLEMELLSVTLEPTLSLDYITCEYKTVIPSPYVKCLRYSECKDKSLPDYSCKVFTGVYPFMWGGAYCFCDTENTQLSEAHVEKSESCKTEFASAYRAHTASASGKLRVLYQGNNVTVSAYANGDHAVTVKDAKFIVGPMSSAWTPFDNKIVVYKGDVYNMDYPPFGAGRPGQFGDIQSRTPESEDVYANTQLVLQRPSAGTVHVPYSQAPSGFKYWLKERGASLQHTAPFGCQIATNPVRAMNCAVGNMPISIDIPDAAFTRVVDAPSLTDMSCEVPACTHSSDFGGAAIIKYAASKKGKCAVHSMTNAVTIREAEIEVEGNSQLQISFSTALASAEFRVQVCSTQVHCAAECHPPKDHIVNYPASHTTLGVQDISATAMSWVQKITGGVGLVVAVAALILIVVLCVSFSRH.

The span at 1–10 (MEFIPTQTFY) shows a compositional bias: polar residues. A disordered region spans residues 1-104 (MEFIPTQTFY…KKKKPGRRER (104 aa)). Residues 36–68 (RKAGQLAQLISAVNKLTMRAVPQQKPRKNRKNK) are host transcription inhibition. The segment covering 60–72 (KPRKNRKNKKQKQ) has biased composition (basic residues). The Nuclear localization signal motif lies at 61–99 (PRKNRKNKKQKQKQQAPRNNMNQKKQPPKKKPAQKKKKP). The span at 73 to 85 (KQQAPRNNMNQKK) shows a compositional bias: low complexity. The binding to the viral RNA stretch occupies residues 84–114 (KKQPPKKKPAQKKKKPGRRERMCMKIENDCI). Positions 86–101 (QPPKKKPAQKKKKPGR) are enriched in basic residues. The ribosome-binding stretch occupies residues 99 to 113 (PGRRERMCMKIENDC). Residues C113 and C128 are joined by a disulfide bond. Residues 113–261 (CIFEVKHEGK…KITPEGAEEW (149 aa)) enclose the Peptidase S3 domain. The active-site Charge relay system is H139. The Nuclear export signal motif lies at 144 to 154 (IDNADLAKLAF). Positions 155–160 (KRSSKY) are interaction with spike glycoprotein E2. The active-site Charge relay system is D161. The segment at 183-193 (PEGYYNWHHGA) is dimerization of the capsid protein. S213 acts as the Charge relay system in catalysis. Positions 219-223 (DNKGR) are dimerization of the capsid protein. The segment at 262-274 (SLAIPVMCLLANT) is functions as an uncleaved signal peptide for the precursor of protein E3/E2. Topologically, residues 262 to 692 (SLAIPVMCLL…YYYELYPTMT (431 aa)) are extracellular. Cystine bridges form between C269-C278, C283-C287, C286-C318, C344-C450, C347-C353, C416-C430, C478-C591, C526-C550, and C528-C545. N273 is a glycosylation site (N-linked (GlcNAc...) asparagine; by host). Interaction with host Mxra8 receptor stretches follow at residues 351-354 (HSCH) and 387-389 (HDW). Interaction with host Mxra8 receptor stretches follow at residues 509 to 512 (QSGN) and 541 to 547 (VINNCKV). 2 N-linked (GlcNAc...) asparagine; by host glycosylation sites follow: N588 and N670. A helical membrane pass occupies residues 693–713 (VVVVSVASFVLLSMVGVAVGM). Residues 714–748 (CMCARRRCITPYELTPGATVPFLLSLICCIRTAKA) are Cytoplasmic-facing. The interaction with the capsid protein stretch occupies residues 716–720 (CARRR). Residues C721, C741, and C742 are each lipidated (S-palmitoyl cysteine; by host). Residues 721–741 (CITPYELTPGATVPFLLSLIC) form a transient transmembrane before p62-6K protein processing region. Cysteines 721 and 742 form a disulfide. Topologically, residues 749–763 (ATYQEAAVYLWNEQQ) are extracellular. The helical transmembrane segment at 764-784 (PLFWLQAIIPLAALIVLCNCL) threads the bilayer. The Cytoplasmic portion of the chain corresponds to 785-795 (RLLPCCCKTLT). The chain crosses the membrane as a helical span at residues 796-816 (FLAVMSVGAHTVSAYEHVTVI). The Extracellular segment spans residues 817–1224 (PNTVGVPYKT…AMSWVQKITG (408 aa)). Cystine bridges form between C858/C923, C871/C903, and C877/C887. Residues 893 to 910 (VYPFMWGGAYCFCDTENT) are E1 fusion peptide loop. Residues N950 and N1079 are each glycosylated (N-linked (GlcNAc...) asparagine; by host). Cystine bridges form between C1068–C1080, C1110–C1185, C1115–C1189, and C1137–C1179. A helical membrane pass occupies residues 1225 to 1245 (GVGLVVAVAALILIVVLCVSF). The S-palmitoyl cysteine; by host moiety is linked to residue C1242. Residues 1246-1248 (SRH) are Cytoplasmic-facing.

As to quaternary structure, homodimer. Homomultimer. Interacts with host karyopherin KPNA4; this interaction allows the nuclear import of the viral capsid protein. Interacts with spike glycoprotein E2. Interacts with host IRAK1; the interaction leads to inhibition of IRAK1-dependent signaling. The precursor of protein E3/E2 and E1 form a heterodimer shortly after synthesis. In terms of assembly, interacts with spike glycoprotein E2. The precursor of protein E3/E2 and E1 form a heterodimer shortly after synthesis. Processing of the precursor of protein E3/E2 into E2 and E3 results in a heterodimer of the spike glycoproteins E2 and E1. Spike at virion surface are constituted of three E2-E1 heterodimers. After target cell attachment and endocytosis, E1 change conformation to form homotrimers. Interacts with 6K protein. Interacts with host MXRA8; this interaction mediates virus entry. The interaction involves 2 adjacent E2-E1 heterodimers. As to quaternary structure, interacts with spike glycoprotein E1. Processing of the precursor of protein E3/E2 into E2 and E3 results in a heterodimer of the spike glycoproteins E2 and E1. Spike at virion surface are constituted of a trimer of E2-E1 heterodimers. Interacts with 6K protein. Interacts with host MXRA8; this interaction mediates virus entry. The interaction involves 2 adjacent E2-E1 heterodimers. Oligomer. Interacts with spike glycoprotein E1. Interacts with spike glycoprotein E2. In terms of processing, structural polyprotein: Specific enzymatic cleavages in vivo yield mature proteins. Capsid protein is auto-cleaved during polyprotein translation, unmasking a signal peptide at the N-terminus of the precursor of E3/E2. The remaining polyprotein is then targeted to the host endoplasmic reticulum, where host signal peptidase cleaves it into pE2, 6K and E1 proteins. pE2 is further processed to mature E3 and E2 by host furin in trans-Golgi vesicle. Palmitoylated via thioester bonds. These palmitoylations may induce disruption of the C-terminus transmembrane. This would result in the reorientation of E2 C-terminus from lumenal to cytoplasmic side. Post-translationally, N-glycosylated. In terms of processing, palmitoylated via thioester bonds.

Its subcellular location is the virion. The protein localises to the host cytoplasm. It is found in the host cell membrane. The protein resides in the host nucleus. It localises to the virion membrane. Its subcellular location is the host Golgi apparatus. The protein localises to the host trans-Golgi network. It is found in the host endoplasmic reticulum. The catalysed reaction is Autocatalytic release of the core protein from the N-terminus of the togavirus structural polyprotein by hydrolysis of a -Trp-|-Ser- bond.. In terms of biological role, forms an icosahedral capsid with a T=4 symmetry composed of 240 copies of the capsid protein surrounded by a lipid membrane through which penetrate 80 spikes composed of trimers of E1-E2 heterodimers. The capsid protein binds to the viral RNA genome at a site adjacent to a ribosome binding site for viral genome translation following genome release. Possesses a protease activity that results in its autocatalytic cleavage from the nascent structural protein. Following its self-cleavage, the capsid protein transiently associates with ribosomes, and within several minutes the protein binds to viral RNA and rapidly assembles into icosahedric core particles. The resulting nucleocapsid eventually associates with the cytoplasmic domain of the spike glycoprotein E2 at the cell membrane, leading to budding and formation of mature virions. In case of infection, new virions attach to target cells and after clathrin-mediated endocytosis their membrane fuses with the host endosomal membrane. This leads to the release of the nucleocapsid into the cytoplasm, followed by an uncoating event necessary for the genomic RNA to become accessible. The uncoating might be triggered by the interaction of capsid proteins with ribosomes. Binding of ribosomes would release the genomic RNA since the same region is genomic RNA-binding and ribosome-binding. Specifically inhibits interleukin-1 receptor-associated kinase 1/IRAK1-dependent signaling during viral entry, representing a means by which the alphaviruses may evade innate immune detection and activation prior to viral gene expression. Degrades host cyclic GMP-AMP synthase (CGAS) thereby inhibiting the cGAS-STING pathway. Provides the signal sequence for the translocation of the precursor of protein E3/E2 to the host endoplasmic reticulum. Furin-cleaved E3 remains associated with spike glycoprotein E1 and mediates pH protection of the latter during the transport via the secretory pathway. After virion release from the host cell, the assembly protein E3 is gradually released in the extracellular space. Functionally, plays a role in viral attachment to target host cell, by binding to the cell receptor MXRA8. Synthesized as a p62 precursor which is processed by furin at the cell membrane just before virion budding, giving rise to E2-E1 heterodimer. The p62-E1 heterodimer is stable, whereas E2-E1 is unstable and dissociate at low pH. p62 is processed at the last step, presumably to avoid E1 fusion activation before its final export to cell surface. E2 C-terminus contains a transitory transmembrane that would be disrupted by palmitoylation, resulting in reorientation of the C-terminal tail from lumenal to cytoplasmic side. This step is critical since E2 C-terminus is involved in budding by interacting with capsid proteins. This release of E2 C-terminus in cytoplasm occurs lately in protein export, and precludes premature assembly of particles at the endoplasmic reticulum membrane. Its function is as follows. Acts as a viroporin that participates in virus glycoprotein processing and transport to the plasma membrane, cell permeabilization and budding of viral particles. Disrupts the calcium homeostasis of the cell, probably at the endoplasmic reticulum level. This leads to cytoplasmic calcium elevation. Because of its lipophilic properties, the 6K protein is postulated to influence the selection of lipids that interact with the transmembrane domains of the glycoproteins, which, in turn, affects the deformability of the bilayer required for the extreme curvature that occurs as budding proceeds. Present in low amount in virions, about 3% compared to viral glycoproteins. In terms of biological role, class II viral fusion protein. Fusion activity is inactive as long as E1 is bound to E2 in mature virion. After virus attachment to target cell via host MXRA8 and endocytosis, acidification of the endosome induce dissociation of E1/E2 heterodimer and concomitant trimerization of the E1 subunits. This E1 trimer is fusion active, and promotes release of viral nucleocapsid in cytoplasm after endosome and viral membrane fusion. Efficient fusion requires the presence of cholesterol and sphingolipid in the target membrane. The protein is Structural polyprotein of Chikungunya virus (strain Nagpur) (CHIKV).